The primary structure comprises 218 residues: uncharacterized protein (218 aa).

A chloroplast-targeting transit peptide spans 1–28; it reads MLSLQCLPPFFISVPNRSTNSCSTAPLR.

This sequence belongs to the SixA phosphatase family.

It is found in the plastid. Its subcellular location is the chloroplast. This is an uncharacterized protein from Arabidopsis thaliana (Mouse-ear cress).